Here is a 271-residue protein sequence, read N- to C-terminus: Calretinin (271 aa).

6 EF-hand domains span residues L16 to A51, N63 to F98, G107 to K142, K151 to F186, L195 to K230, and M235 to P270. The Ca(2+) site is built by D29, D31, N33, Y35, E40, D76, N78, D80, K82, E87, D120, D122, S124, Y126, E131, D164, N166, D168, K170, E175, D208, D210, S212, Y214, and E219. Y214 bears the Phosphotyrosine mark.

The protein belongs to the calbindin family. In terms of tissue distribution, widely expressed in central nervous system. Expressed in type I unipolar brush cells of the cerebellum (at protein level).

Its subcellular location is the synapse. It localises to the cell projection. The protein resides in the dendrite. Calcium-binding protein involved in calcium homeostasis and signal transduction. It plays a critical role in buffering intracellular calcium levels and modulating calcium-dependent signaling pathways. Predominantly expressed in specific neuronal populations, influences synaptic plasticity and neuronal excitability, contributing to learning and memory. During embryonic development, it facilitates neuronal differentiation and maturation. The chain is Calretinin (Calb2) from Mus musculus (Mouse).